A 190-amino-acid polypeptide reads, in one-letter code: Protein PLANT CADMIUM RESISTANCE 10 (190 aa).

Transmembrane regions (helical) follow at residues 78 to 98 (LLGS…WALV) and 108 to 125 (GALL…ACGY).

This sequence belongs to the cornifelin family.

Its subcellular location is the membrane. Its function is as follows. May be involved in cadmium resistance. This chain is Protein PLANT CADMIUM RESISTANCE 10 (PCR10), found in Arabidopsis thaliana (Mouse-ear cress).